Reading from the N-terminus, the 528-residue chain is MTSSIKSSLLNLGLLIIFFVFFFLVINCRGESSTCLAVYKQGGAPAVFQSPKCPRWILQNWGSPTHSGAGRCHTAAIQGRRNYQEDRLLCALDLRIPFPGKTGTPKDVLVGIAAVFDGHNGAEASDMASKLLLDYFALHINFLLDATFSAMTRKLIGRFPTKGDHSVILHGVSRDEIMHLYNLDFQMQFRDSLPLHFDDSLPLDIMKEALLRAIHDIDVTFTKEASNRKLNSGSTATIALIADGQLMVASIGDSKALLCSEKFETLEEARATLVKLYRERRRNRGSSPSRFSDFKLEHGNGLLRFIAKELTKDHHPNREDEKIRVEAAGGYVTEWAGVPRVNGQLTVSRAIGDLTYRSYGVISAPEVMDWQPLVANDSFLVVSSDGIFEKLEVQEVCDLLWEVNNQTSSGAGVPSYCSISLADCLVNTAFEKGSMDNMAAVVVPLKSNLVTQLQRKEQSMNDNKDKIASALPCSNCTLPLPNDINLGPLQLKQAQPLGTMFNRLLRLKTEVFAAFICQRTLLGHLKGK.

A helical membrane pass occupies residues 8–28; the sequence is SLLNLGLLIIFFVFFFLVINC. In terms of domain architecture, PPM-type phosphatase spans 71–445; the sequence is RCHTAAIQGR…DNMAAVVVPL (375 aa). Residues aspartate 117, glycine 118, aspartate 385, and aspartate 436 each contribute to the Mn(2+) site.

It belongs to the PP2C family. Requires Mg(2+) as cofactor. Mn(2+) serves as cofactor.

The protein resides in the membrane. The enzyme catalyses O-phospho-L-seryl-[protein] + H2O = L-seryl-[protein] + phosphate. It catalyses the reaction O-phospho-L-threonyl-[protein] + H2O = L-threonyl-[protein] + phosphate. This Arabidopsis thaliana (Mouse-ear cress) protein is Probable protein phosphatase 2C 51.